Consider the following 317-residue polypeptide: MGEVQREKVAVIIGPTAVGKTKLSIDLAKALNGEIVSGDSMQIYRTMDIGTAKVTTDEMDGIPHYMIDIKDPEDSFSVAEFQESVRKCIREITERGKLPIIVGGTGLYIQSVLFDYQFTDEAGDATYREQMEKLALEHGVEYVHKKLQEVDPESAERIHANNVRRVIRALEIFHTTGEKMSNQLEKQENELLYDVSLIGLTMDREMLYDRINLRVNLMIEQGLLEEVKGLHERGVRDCQSIQAIGYKEIYDYFENRVSLEEAVSQLKTNSRRYAKRQLTWFRNKMDVGWFDVTDGEKTSEILRYIEGKLQLKSNNSK.

14-21 serves as a coordination point for ATP; the sequence is GPTAVGKT. Substrate is bound at residue 16–21; it reads TAVGKT. The tract at residues 39–42 is interaction with substrate tRNA; sequence DSMQ.

This sequence belongs to the IPP transferase family. Monomer. Mg(2+) serves as cofactor.

The enzyme catalyses adenosine(37) in tRNA + dimethylallyl diphosphate = N(6)-dimethylallyladenosine(37) in tRNA + diphosphate. Catalyzes the transfer of a dimethylallyl group onto the adenine at position 37 in tRNAs that read codons beginning with uridine, leading to the formation of N6-(dimethylallyl)adenosine (i(6)A). This chain is tRNA dimethylallyltransferase, found in Bacillus mycoides (strain KBAB4) (Bacillus weihenstephanensis).